Here is a 240-residue protein sequence, read N- to C-terminus: Lactate utilization protein C (240 aa).

The protein belongs to the LutC/YkgG family.

Its function is as follows. Is involved in L-lactate degradation and allows cells to grow with lactate as the sole carbon source. The chain is Lactate utilization protein C from Geobacillus kaustophilus (strain HTA426).